The chain runs to 971 residues: DNA-directed RNA polymerase subunit Rpo1N (971 aa).

M1 carries the post-translational modification Blocked amino end (Met). C62, C65, C72, H75, C102, C105, C149, and C152 together coordinate Zn(2+). The interval 185 to 204 (SMQPDEDEDDAGVSPQELAE) is disordered. The Mg(2+) site is built by D527, D529, and D531. Positions 951–971 (VEEPPTNLSEHGAAWEVESDD) are disordered.

This sequence belongs to the RNA polymerase beta' chain family. Part of the RNA polymerase complex. Requires Mg(2+) as cofactor. It depends on Zn(2+) as a cofactor. Post-translationally, the N-terminus is blocked.

It localises to the cytoplasm. It carries out the reaction RNA(n) + a ribonucleoside 5'-triphosphate = RNA(n+1) + diphosphate. In terms of biological role, DNA-dependent RNA polymerase (RNAP) catalyzes the transcription of DNA into RNA using the four ribonucleoside triphosphates as substrates. Forms the clamp head domain. The sequence is that of DNA-directed RNA polymerase subunit Rpo1N from Halobacterium salinarum (strain ATCC 29341 / DSM 671 / R1).